The chain runs to 1028 residues: RNA cytidine acetyltransferase 1 (1028 aa).

ATP is bound by residues 286–295 and Arg-460; that span reads GRGKSAALGL. The 184-residue stretch at 548-731 folds into the N-acetyltransferase domain; that stretch reads VLLGPVDESK…FAPFYISQIP (184 aa). Acetyl-CoA-binding positions include 619-621, 626-632, and Lys-719; these read IAV and MKMGYGS. The interval 989 to 1028 is disordered; sequence ISIESTKTDNKKEKPSGFDKSAKKRGNDKHSSTSNKKRRA. Over residues 994 to 1009 the composition is skewed to basic and acidic residues; sequence TKTDNKKEKPSGFDKS.

Belongs to the RNA cytidine acetyltransferase family. NAT10 subfamily.

It is found in the nucleus. The protein resides in the nucleolus. It catalyses the reaction a cytidine in 18S rRNA + acetyl-CoA + ATP + H2O = an N(4)-acetylcytidine in 18S rRNA + ADP + phosphate + CoA + H(+). It carries out the reaction a cytidine in tRNA + acetyl-CoA + ATP + H2O = an N(4)-acetylcytidine in tRNA + ADP + phosphate + CoA + H(+). RNA cytidine acetyltransferase with specificity toward both 18S rRNA and tRNAs. Catalyzes the formation of N(4)-acetylcytidine (ac4C) in 18S rRNA. Required for early nucleolar cleavages of precursor rRNA at sites A0, A1 and A2 during 18S rRNA synthesis. Catalyzes the formation of ac4C in serine and leucine tRNAs. Requires a tRNA-binding adapter protein for full tRNA acetyltransferase activity but not for 18S rRNA acetylation. This is RNA cytidine acetyltransferase 1 from Arabidopsis thaliana (Mouse-ear cress).